A 133-amino-acid chain; its full sequence is Small ribosomal subunit protein uS8 (133 aa).

Belongs to the universal ribosomal protein uS8 family. In terms of assembly, part of the 30S ribosomal subunit. Contacts proteins S5 and S12.

Its function is as follows. One of the primary rRNA binding proteins, it binds directly to 16S rRNA central domain where it helps coordinate assembly of the platform of the 30S subunit. The chain is Small ribosomal subunit protein uS8 from Prochlorococcus marinus (strain MIT 9303).